The primary structure comprises 471 residues: Tryptophanase (471 aa).

3 positions are modified to N6-acetyllysine: Lys5, Lys115, and Lys156. Lys270 bears the N6-(pyridoxal phosphate)lysine mark. At Lys450 the chain carries N6-acetyllysine.

Belongs to the beta-eliminating lyase family. Homotetramer. Requires pyridoxal 5'-phosphate as cofactor.

It catalyses the reaction L-tryptophan + H2O = indole + pyruvate + NH4(+). Its pathway is amino-acid degradation; L-tryptophan degradation via pyruvate pathway; indole and pyruvate from L-tryptophan: step 1/1. The sequence is that of Tryptophanase from Escherichia coli O6:H1 (strain CFT073 / ATCC 700928 / UPEC).